The sequence spans 211 residues: Agamous-like MADS-box protein AGL12 (211 aa).

The MADS-box domain occupies 3–57; it reads RGKIQLKRIENPVHRQVTFCKRRTGLLKKAKELSVLCDAEIGVVIFSPQGKLFEL. In terms of domain architecture, K-box spans 95–185; that stretch reads NLDPKDEINV…LEKIEENNNS (91 aa).

In terms of tissue distribution, preferentially expressed in roots. In root meristem, expressed in external cells of columella, lateral root cap and atrichoblasts. In mature root, expressed in the central cylinder. Expressed in leaf vasculature, young floral meristems and nectaries.

It is found in the nucleus. Functionally, probable transcription activator that regulates root development by controlling cell proliferation in root meristem. May mediate responses to auxin in the root. May act as promoter of the flowering transition through up-regulation of SOC, FT and LFY. In Arabidopsis thaliana (Mouse-ear cress), this protein is Agamous-like MADS-box protein AGL12.